Here is a 211-residue protein sequence, read N- to C-terminus: Synaptosomal-associated protein 23 (211 aa).

Position 1 is an N-acetylmethionine (Met1). Phosphoserine is present on residues Ser5, Ser6, Ser20, Ser23, and Ser34. The region spanning 14–76 is the t-SNARE coiled-coil homology 1 domain; sequence HQITDESLES…RETEKTLTEL (63 aa). Positions 23–76 form a coiled coil; sequence STRRILGLAIESQDAGIKTITMLDEQKEQLNRIEEGLDQINKDMRETEKTLTEL. Residues Cys79, Cys80, Cys83, Cys85, and Cys87 are each lipidated (S-palmitoyl cysteine). Residue Ser110 is modified to Phosphoserine. The S-palmitoyl cysteine moiety is linked to residue Cys112. One can recognise a t-SNARE coiled-coil homology 2 domain in the interval 146 to 208; the sequence is DAREDEMEEN…DIANARAKKL (63 aa). Ser161 carries the phosphoserine modification.

It belongs to the SNAP-25 family. In terms of assembly, homotetramer (via coiled-coil domain), also forms heterotetramers with STX4 and VAMP3. Found in a complex with VAMP8 and STX1A. Found in a complex with VAMP8 and STX4 in pancreas. Interacts simultaneously with SNAPIN and SYN4. Interacts with STX1A. Interacts with STX12. Interacts tightly to multiple syntaxins and synaptobrevins/VAMPs. Interacts with ZDHHC13 (via ANK repeats). Interacts with ZDHHC17 (via ANK repeats). As to expression, ubiquitous. Highest levels where found in placenta.

The protein resides in the cell membrane. Its subcellular location is the synapse. The protein localises to the synaptosome. Its function is as follows. Essential component of the high affinity receptor for the general membrane fusion machinery and an important regulator of transport vesicle docking and fusion. The polypeptide is Synaptosomal-associated protein 23 (SNAP23) (Homo sapiens (Human)).